The sequence spans 940 residues: Isoleucine--tRNA ligase (940 aa).

The 'HIGH' region motif lies at 58-68 (PYANGSIHIGH). Residue E564 coordinates L-isoleucyl-5'-AMP. The 'KMSKS' region signature appears at 605–609 (KMSKS). K608 provides a ligand contact to ATP. Residues C903, C906, C923, and C926 each coordinate Zn(2+).

It belongs to the class-I aminoacyl-tRNA synthetase family. IleS type 1 subfamily. In terms of assembly, monomer. Zn(2+) is required as a cofactor.

The protein resides in the cytoplasm. The catalysed reaction is tRNA(Ile) + L-isoleucine + ATP = L-isoleucyl-tRNA(Ile) + AMP + diphosphate. Functionally, catalyzes the attachment of isoleucine to tRNA(Ile). As IleRS can inadvertently accommodate and process structurally similar amino acids such as valine, to avoid such errors it has two additional distinct tRNA(Ile)-dependent editing activities. One activity is designated as 'pretransfer' editing and involves the hydrolysis of activated Val-AMP. The other activity is designated 'posttransfer' editing and involves deacylation of mischarged Val-tRNA(Ile). This chain is Isoleucine--tRNA ligase, found in Shewanella sediminis (strain HAW-EB3).